Here is a 130-residue protein sequence, read N- to C-terminus: MPKQVIIPPGTTTPIAPFVPGTLADGVVYVSGTLPFDKQNNVVHIGDPKAQTRHVLETIKSVIETAGGSMADVTFNSIFITDWTNYAAINEVYAEFFPGDKPARFCIQCGLVKPDALVEIASVAHIGTPT.

This sequence belongs to the RutC family.

It carries out the reaction (Z)-3-aminoacrylate + H2O + H(+) = 3-oxopropanoate + NH4(+). Its function is as follows. Involved in pyrimidine catabolism. Catalyzes the deamination of 3-aminoacrylate to malonic semialdehyde, a reaction that can also occur spontaneously. RutC may facilitate the reaction and modulate the metabolic fitness, rather than catalyzing essential functions. The sequence is that of 3-aminoacrylate deaminase RutC from Klebsiella variicola (strain At-22).